Here is a 102-residue protein sequence, read N- to C-terminus: Large ribosomal subunit protein bL21 (102 aa).

Belongs to the bacterial ribosomal protein bL21 family. In terms of assembly, part of the 50S ribosomal subunit. Contacts protein L20.

Functionally, this protein binds to 23S rRNA in the presence of protein L20. The polypeptide is Large ribosomal subunit protein bL21 (Geobacter sulfurreducens (strain ATCC 51573 / DSM 12127 / PCA)).